Here is a 222-residue protein sequence, read N- to C-terminus: Pre-mRNA cleavage factor Im 25 kDa subunit 1 (222 aa).

The Nudix hydrolase domain maps to 67–194; it reads GLRTCVEAVL…KLLAVPLCQL (128 aa). Residues 94–96 form an interaction with RNA region; the sequence is SIF. Residues 101 to 122 carry the Nudix box motif; sequence GRLRPGESDIEGLKRKLASKLS.

Belongs to the Nudix hydrolase family. CPSF5 subfamily. Homodimer. Component of the cleavage factor Im (CFIm) complex. Forms a complex with cleavage and polyadenylation specificity factor (CPSF) subunits FIPS5.

The protein resides in the nucleus. In terms of biological role, component of the cleavage factor Im (CFIm) complex that plays a key role in pre-mRNA 3'-processing. Involved in association with CPSF6 or CPSF7 in pre-MRNA 3'-end poly(A) site cleavage and poly(A) addition. NUDT21/CPSF5 binds to cleavage and polyadenylation RNA substrates. The homodimer mediates simultaneous sequence-specific recognition of two 5'-UGUA-3' elements within the pre-mRNA. Binds to, but does not hydrolyze mono- and di-adenosine nucleotides. May have a role in mRNA export. The chain is Pre-mRNA cleavage factor Im 25 kDa subunit 1 from Arabidopsis thaliana (Mouse-ear cress).